The chain runs to 37 residues: Large ribosomal subunit protein bL36 (37 aa).

The protein belongs to the bacterial ribosomal protein bL36 family.

This chain is Large ribosomal subunit protein bL36, found in Janthinobacterium sp. (strain Marseille) (Minibacterium massiliensis).